We begin with the raw amino-acid sequence, 205 residues long: MEINYGLYLITDRRFLKGRQLKKVVEDAILGGVTIVQVREKDVSTREFYNVAKEVKEVTDYYKVPIIINDRLDIAQAIDANGVHLGQKDMHLNIAREILGKDKIIGISVGNVKEALEAQNNGADYLGIGTIFPTGSKKDVDAIIGIDGLSKIKDSISIPSVAIGGINKTNFKDVLKTGIEGISVISAILDEDDIKLAANNLLINK.

Residues Gln37 to Lys41 and Asn69 contribute to the 4-amino-2-methyl-5-(diphosphooxymethyl)pyrimidine site. Mg(2+) contacts are provided by Asp70 and Asp89. Ser108 provides a ligand contact to 4-amino-2-methyl-5-(diphosphooxymethyl)pyrimidine. Thr134 to Ser136 contacts 2-[(2R,5Z)-2-carboxy-4-methylthiazol-5(2H)-ylidene]ethyl phosphate. Lys137 contacts 4-amino-2-methyl-5-(diphosphooxymethyl)pyrimidine. Residues Gly165 and Ile185–Ser186 each bind 2-[(2R,5Z)-2-carboxy-4-methylthiazol-5(2H)-ylidene]ethyl phosphate.

The protein belongs to the thiamine-phosphate synthase family. Requires Mg(2+) as cofactor.

It carries out the reaction 2-[(2R,5Z)-2-carboxy-4-methylthiazol-5(2H)-ylidene]ethyl phosphate + 4-amino-2-methyl-5-(diphosphooxymethyl)pyrimidine + 2 H(+) = thiamine phosphate + CO2 + diphosphate. The catalysed reaction is 2-(2-carboxy-4-methylthiazol-5-yl)ethyl phosphate + 4-amino-2-methyl-5-(diphosphooxymethyl)pyrimidine + 2 H(+) = thiamine phosphate + CO2 + diphosphate. The enzyme catalyses 4-methyl-5-(2-phosphooxyethyl)-thiazole + 4-amino-2-methyl-5-(diphosphooxymethyl)pyrimidine + H(+) = thiamine phosphate + diphosphate. It functions in the pathway cofactor biosynthesis; thiamine diphosphate biosynthesis; thiamine phosphate from 4-amino-2-methyl-5-diphosphomethylpyrimidine and 4-methyl-5-(2-phosphoethyl)-thiazole: step 1/1. Its function is as follows. Condenses 4-methyl-5-(beta-hydroxyethyl)thiazole monophosphate (THZ-P) and 2-methyl-4-amino-5-hydroxymethyl pyrimidine pyrophosphate (HMP-PP) to form thiamine monophosphate (TMP). The sequence is that of Thiamine-phosphate synthase from Clostridium botulinum (strain Loch Maree / Type A3).